The primary structure comprises 227 residues: PKHD-type hydroxylase ABSDF3031 (227 aa).

The region spanning 78 to 178 (KIIPPLFNRY…RFASFFWVQS (101 aa)) is the Fe2OG dioxygenase domain. Fe cation-binding residues include His96, Asp98, and His159. A 2-oxoglutarate-binding site is contributed by Arg169.

Fe(2+) serves as cofactor. It depends on L-ascorbate as a cofactor.

This Acinetobacter baumannii (strain SDF) protein is PKHD-type hydroxylase ABSDF3031.